A 229-amino-acid polypeptide reads, in one-letter code: Ribosomal RNA small subunit methyltransferase G (229 aa).

S-adenosyl-L-methionine contacts are provided by residues glycine 87, leucine 92, 138-139 (VE), and arginine 154.

It belongs to the methyltransferase superfamily. RNA methyltransferase RsmG family.

The protein localises to the cytoplasm. The catalysed reaction is guanosine(527) in 16S rRNA + S-adenosyl-L-methionine = N(7)-methylguanosine(527) in 16S rRNA + S-adenosyl-L-homocysteine. Specifically methylates the N7 position of guanine in position 527 of 16S rRNA. This is Ribosomal RNA small subunit methyltransferase G from Oleidesulfovibrio alaskensis (strain ATCC BAA-1058 / DSM 17464 / G20) (Desulfovibrio alaskensis).